The primary structure comprises 390 residues: D-alanyl-D-alanine carboxypeptidase DacD (390 aa).

Residues 1–23 (MLLKRRLFIAASLFAMHLSPALA) form the signal peptide. The active-site Acyl-ester intermediate is serine 65. Lysine 68 acts as the Proton acceptor in catalysis. The active site involves serine 131. Lysine 234 lines the substrate pocket.

The protein belongs to the peptidase S11 family.

It is found in the cell inner membrane. It carries out the reaction Preferential cleavage: (Ac)2-L-Lys-D-Ala-|-D-Ala. Also transpeptidation of peptidyl-alanyl moieties that are N-acyl substituents of D-alanine.. It functions in the pathway cell wall biogenesis; peptidoglycan biosynthesis. In terms of biological role, removes C-terminal D-alanyl residues from sugar-peptide cell wall precursors. The chain is D-alanyl-D-alanine carboxypeptidase DacD (dacD) from Salmonella typhimurium (strain LT2 / SGSC1412 / ATCC 700720).